Consider the following 638-residue polypeptide: Methyl-accepting chemotaxis protein McpQ (638 aa).

A helical transmembrane segment spans residues 18-38 (LGLGFGLVLLLTLAITLTGWH). Residues 45-282 (DRGDKLGNIS…SQTEVRDAAA (238 aa)) enclose the HBM domain. A helical membrane pass occupies residues 287 to 307 (TLLTVATVLALALGLLAAWAI). One can recognise an HAMP domain in the interval 309–361 (RQIIIPLRQTLRAAERVASGDLTQSLQVQRRDELGQLQASMHRMTQGLRELIG). The 237-residue stretch at 366 to 602 (GVTQIASAAE…EINRSVMNVR (237 aa)) folds into the Methyl-accepting transducer domain.

It belongs to the methyl-accepting chemotaxis (MCP) protein family.

Its subcellular location is the cell membrane. In terms of biological role, chemotactic-signal transducers respond to changes in the concentration of attractants and repellents in the environment, transduce a signal from the outside to the inside of the cell, and facilitate sensory adaptation through the variation of the level of methylation. McpQ recognizes specifically citrate and citrate/metal(2+) complexes. Binds citrate/metal(2+) complexes with higher affinity than free citrate, and mediates preferentially chemotaxis toward citrate/metal(2+) complexes. The protein is Methyl-accepting chemotaxis protein McpQ of Pseudomonas putida (strain ATCC 47054 / DSM 6125 / CFBP 8728 / NCIMB 11950 / KT2440).